Reading from the N-terminus, the 155-residue chain is Small ribosomal subunit protein uS7 (155 aa).

It belongs to the universal ribosomal protein uS7 family. As to quaternary structure, part of the 30S ribosomal subunit. Contacts proteins S9 and S11.

In terms of biological role, one of the primary rRNA binding proteins, it binds directly to 16S rRNA where it nucleates assembly of the head domain of the 30S subunit. Is located at the subunit interface close to the decoding center, probably blocks exit of the E-site tRNA. The chain is Small ribosomal subunit protein uS7 from Xanthomonas campestris pv. campestris (strain 8004).